Reading from the N-terminus, the 209-residue chain is Thiamine-phosphate synthase (209 aa).

4-amino-2-methyl-5-(diphosphooxymethyl)pyrimidine is bound by residues 38–42 (QYRAK) and asparagine 70. Mg(2+)-binding residues include aspartate 71 and aspartate 90. Residue serine 109 participates in 4-amino-2-methyl-5-(diphosphooxymethyl)pyrimidine binding. 2-[(2R,5Z)-2-carboxy-4-methylthiazol-5(2H)-ylidene]ethyl phosphate is bound at residue 135 to 137 (TST). Residue lysine 138 coordinates 4-amino-2-methyl-5-(diphosphooxymethyl)pyrimidine. 2-[(2R,5Z)-2-carboxy-4-methylthiazol-5(2H)-ylidene]ethyl phosphate is bound by residues glycine 165 and 185 to 186 (VS).

This sequence belongs to the thiamine-phosphate synthase family. Requires Mg(2+) as cofactor.

The catalysed reaction is 2-[(2R,5Z)-2-carboxy-4-methylthiazol-5(2H)-ylidene]ethyl phosphate + 4-amino-2-methyl-5-(diphosphooxymethyl)pyrimidine + 2 H(+) = thiamine phosphate + CO2 + diphosphate. It catalyses the reaction 2-(2-carboxy-4-methylthiazol-5-yl)ethyl phosphate + 4-amino-2-methyl-5-(diphosphooxymethyl)pyrimidine + 2 H(+) = thiamine phosphate + CO2 + diphosphate. The enzyme catalyses 4-methyl-5-(2-phosphooxyethyl)-thiazole + 4-amino-2-methyl-5-(diphosphooxymethyl)pyrimidine + H(+) = thiamine phosphate + diphosphate. It participates in cofactor biosynthesis; thiamine diphosphate biosynthesis; thiamine phosphate from 4-amino-2-methyl-5-diphosphomethylpyrimidine and 4-methyl-5-(2-phosphoethyl)-thiazole: step 1/1. Condenses 4-methyl-5-(beta-hydroxyethyl)thiazole monophosphate (THZ-P) and 2-methyl-4-amino-5-hydroxymethyl pyrimidine pyrophosphate (HMP-PP) to form thiamine monophosphate (TMP). This Persephonella marina (strain DSM 14350 / EX-H1) protein is Thiamine-phosphate synthase.